The primary structure comprises 1149 residues: Transforming acidic coiled-coil-containing protein 2 (1149 aa).

Disordered regions lie at residues 1 to 73 (MGNE…GSNQ), 91 to 227 (SASP…ASSG), and 247 to 430 (PCSA…VPLT). Over residues 13-35 (TSSVQSPRSLQPPGKSQSLQKQQ) the composition is skewed to polar residues. Residues 91 to 106 (SASPSAARASPAPLAP) show a composition bias toward low complexity. S100 bears the Phosphoserine mark. Pro residues predominate over residues 155 to 180 (KAPPAPPPPPPEVTPEPEVIDPPAPE). The residue at position 265 (S265) is a Phosphoserine. Composition is skewed to polar residues over residues 267–284 (ESVPPSKSTLSRSLSLQA) and 300–317 (TLTTDACGTGSNSASSTL). Over residues 318–334 (KRTKKTRPPSLKKKQAT) the composition is skewed to basic residues. S354 carries the phosphoserine modification. Residues 358 to 368 (SEEHLAPETKT) show a composition bias toward basic and acidic residues. The residue at position 419 (S419) is a Phosphoserine. T439 bears the Phosphothreonine mark. Residues 463 to 617 (SEDKGSWESQ…PAKKKKTPLK (155 aa)) form a disordered region. Over residues 481-498 (KIGKKPVAKMPLRRPKMK) the composition is skewed to basic residues. An SPAZ domain is found at 508 to 596 (PASPPRSPTE…SPASFEIPAS (89 aa)). S510 and S514 each carry phosphoserine. T516 is modified (phosphothreonine). A compositionally biased stretch (polar residues) spans 541–561 (NPFSSTSKMQESPKLSQQSYN). Residues S552, S582, S585, S587, and S596 each carry the phosphoserine modification. A compositionally biased stretch (low complexity) spans 575–590 (KASSKTPSSPSKSPAS). Phosphothreonine occurs at positions 632, 653, and 657. 2 disordered regions span residues 636–665 (KKSPKRSPLSDPPSQDPTPAATPEAPSAIS) and 696–719 (DFPQPSDLSNFVNETKFNSPSEEL). Residues 652 to 665 (PTPAATPEAPSAIS) show a composition bias toward low complexity. Positions 701–716 (SDLSNFVNETKFNSPS) are enriched in polar residues. Phosphoserine occurs at positions 714 and 736. Residue T755 is modified to Phosphothreonine. The segment at 756–780 (PQESPVKSPPVRMSDSPTPCSGSSF) is disordered. A phosphoserine mark is found at S759 and S771. The span at 770-780 (DSPTPCSGSSF) shows a compositional bias: polar residues. Coiled-coil stretches lie at residues 877-905 (AQKLQEELEFAVMRIEALKLARQIALASR) and 948-1148 (DLDS…KMGK).

This sequence belongs to the TACC family. As to quaternary structure, interacts with microtubules. Interacts with YEATS4, GCN5L2 and PCAF. Interacts with CCDC100/CEP120. Phosphorylated; which is required for localization in centrosome. As to expression, expressed in brain, kidney, lung, thymus and ovary. Not detectable in normal tissues at protein level.

It localises to the cytoplasm. The protein localises to the nucleus. Its subcellular location is the cytoskeleton. It is found in the microtubule organizing center. The protein resides in the centrosome. In terms of biological role, plays a role in the microtubule-dependent coupling of the nucleus and the centrosome. Involved in the processes that regulate centrosome-mediated interkinetic nuclear migration (INM) of neural progenitors. May play a role in organizing centrosomal microtubules. This chain is Transforming acidic coiled-coil-containing protein 2 (Tacc2), found in Mus musculus (Mouse).